The primary structure comprises 238 residues: Survival of motor neuron-related-splicing factor 30 (238 aa).

Residues 72–132 (SWKVGDKCMA…KPVEEGRKAK (61 aa)) enclose the Tudor domain. The short motif at 142–160 (KKEMIAQQREYKKKKALKK) is the Nuclear localization signal element. Ser201 is subject to Phosphoserine. Lys219 is modified (N6-acetyllysine).

It belongs to the SMN family. In terms of assembly, associates with spliceosomes. Associates with U4/U5/U6 tri-snRNP and with U2 snRNP. Interacts (via Tudor domain) with SNRPD3 (via C-terminus); the interaction is direct. In terms of tissue distribution, detected at intermediate levels in skeletal muscle, and at low levels in heart and pancreas.

The protein localises to the nucleus speckle. It localises to the nucleus. The protein resides in the cajal body. In terms of biological role, involved in spliceosome assembly. The chain is Survival of motor neuron-related-splicing factor 30 (SMNDC1) from Homo sapiens (Human).